Consider the following 37-residue polypeptide: Photosystem II reaction center protein Y (37 aa).

Residues 4–22 (AIVVFAPIIAAVAWVVFNI) traverse the membrane as a helical segment.

The protein belongs to the PsbY family. In terms of assembly, PSII is composed of 1 copy each of membrane proteins PsbA, PsbB, PsbC, PsbD, PsbE, PsbF, PsbH, PsbI, PsbJ, PsbK, PsbL, PsbM, PsbT, PsbX, PsbY, Psb30/Ycf12, peripheral proteins PsbO, CyanoQ (PsbQ), PsbU, PsbV and a large number of cofactors. It forms dimeric complexes.

Its subcellular location is the cellular thylakoid membrane. Its function is as follows. Loosely associated component of the core of photosystem II (PSII), it is not always seen in crystals. PSII is a light-driven water plastoquinone oxidoreductase, using light energy to abstract electrons from H(2)O, generating a proton gradient subsequently used for ATP formation. In Prochlorococcus marinus (strain MIT 9312), this protein is Photosystem II reaction center protein Y.